Here is a 91-residue protein sequence, read N- to C-terminus: UPF0213 protein NMA2126 (91 aa).

Residues 4-83 enclose the GIY-YIG domain; it reads SNWSLYLILC…AAQKRKLWEQ (80 aa).

The protein belongs to the UPF0213 family.

This chain is UPF0213 protein NMA2126, found in Neisseria meningitidis serogroup A / serotype 4A (strain DSM 15465 / Z2491).